The sequence spans 90 residues: Photosystem I reaction center subunit PsaK 2 (90 aa).

A run of 2 helical transmembrane segments spans residues 20 to 42 and 67 to 89; these read LSVGIIMCLCNVFAFVIGYFAIQ and LATMSFGHILGAGMVLGLASSGI.

The protein belongs to the PsaG/PsaK family.

It is found in the cellular thylakoid membrane. This chain is Photosystem I reaction center subunit PsaK 2 (psaK2), found in Synechocystis sp. (strain ATCC 27184 / PCC 6803 / Kazusa).